The chain runs to 308 residues: Putative S-adenosyl-L-methionine-dependent methyltransferase MAB_4585c (308 aa).

Residues Asp-131 and 160–161 each bind S-adenosyl-L-methionine; that span reads DL.

Belongs to the UPF0677 family.

Its function is as follows. Exhibits S-adenosyl-L-methionine-dependent methyltransferase activity. In Mycobacteroides abscessus (strain ATCC 19977 / DSM 44196 / CCUG 20993 / CIP 104536 / JCM 13569 / NCTC 13031 / TMC 1543 / L948) (Mycobacterium abscessus), this protein is Putative S-adenosyl-L-methionine-dependent methyltransferase MAB_4585c.